Here is a 152-residue protein sequence, read N- to C-terminus: Large-conductance mechanosensitive channel (152 aa).

2 consecutive transmembrane segments (helical) span residues 14–34 (VIDLAIGVIIGGAFGKIVTSL) and 81–101 (GLFLNNLINFLIIAFSIFIAI).

Belongs to the MscL family. As to quaternary structure, homopentamer.

It is found in the cell membrane. Its function is as follows. Channel that opens in response to stretch forces in the membrane lipid bilayer. May participate in the regulation of osmotic pressure changes within the cell. The polypeptide is Large-conductance mechanosensitive channel (Clostridium perfringens (strain 13 / Type A)).